Here is a 1006-residue protein sequence, read N- to C-terminus: Probable protein phosphatase DDB_G0279461 (1006 aa).

Over residues 1–12 (MMVPSLSTSISS) the composition is skewed to polar residues. Disordered stretches follow at residues 1-119 (MMVP…NNKE), 146-188 (SHAS…RSNS), 214-269 (SSED…NGIR), 312-387 (DAES…PPNQ), 459-513 (NINN…NNIQ), 525-563 (DYNI…NSKF), and 604-642 (GSIP…TSAS). Over residues 59–69 (NEEEGTADNEL) the composition is skewed to acidic residues. Residues 65-122 (ADNELESLMSLVNDNNNNNNNTSGIDDDNNNDIDDNNNNNNNNNNNNNNNNNNKEGLN) adopt a coiled-coil conformation. The span at 77–88 (NDNNNNNNNTSG) shows a compositional bias: low complexity. Residues 89–99 (IDDDNNNDIDD) are compositionally biased toward acidic residues. Low complexity predominate over residues 100-117 (NNNNNNNNNNNNNNNNNN). The span at 146–158 (SHASVSNQSSNGS) shows a compositional bias: polar residues. Low complexity-rich tracts occupy residues 220-234 (SCHN…NKNN), 244-254 (NINNNNNNNCN), and 316-387 (NYNN…PPNQ). Residues 450 to 516 (KIDNLNKNIN…NNNNNIQDIQ (67 aa)) adopt a coiled-coil conformation. Residues 466-481 (TDSQQPLPSIDVNFSH) show a composition bias toward polar residues. Residues 482–511 (NNNNNNNDNDNNNNNNNNNNNNNNNNNNNN) show a composition bias toward low complexity. A compositionally biased stretch (polar residues) spans 525 to 538 (DYNIQEGNDINNDN). 2 stretches are compositionally biased toward low complexity: residues 552-561 (SSNNNNNNNS) and 613-639 (NNNN…TTTT). A PPM-type phosphatase domain is found at 744–1005 (DINKRGLKRA…DNISIIVVTL (262 aa)). Asp784, Gly785, Asp956, and Asp996 together coordinate Mn(2+).

It in the C-terminal section; belongs to the PP2C family. Mg(2+) serves as cofactor. It depends on Mn(2+) as a cofactor.

The catalysed reaction is O-phospho-L-seryl-[protein] + H2O = L-seryl-[protein] + phosphate. It carries out the reaction O-phospho-L-threonyl-[protein] + H2O = L-threonyl-[protein] + phosphate. The sequence is that of Probable protein phosphatase DDB_G0279461 from Dictyostelium discoideum (Social amoeba).